The following is a 329-amino-acid chain: Coiled-coil domain-containing protein 54 (329 aa).

Residues 86 to 149 (NIVSSISNIQ…VTELESQNSY (64 aa)) are a coiled coil. The segment covering 178 to 191 (TPKGTATSPDTVIS) has biased composition (polar residues). The disordered stretch occupies residues 178 to 214 (TPKGTATSPDTVISSAEPERVSSYPEPTGELKKKTTS). Thr182 carries the post-translational modification Phosphothreonine.

This is Coiled-coil domain-containing protein 54 (Ccdc54) from Mus musculus (Mouse).